A 434-amino-acid chain; its full sequence is Trigger factor (434 aa).

The region spanning 161–246 is the PPIase FKBP-type domain; that stretch reads EDRATIDFSG…LKKVEERELP (86 aa).

The protein belongs to the FKBP-type PPIase family. Tig subfamily.

It is found in the cytoplasm. It catalyses the reaction [protein]-peptidylproline (omega=180) = [protein]-peptidylproline (omega=0). In terms of biological role, involved in protein export. Acts as a chaperone by maintaining the newly synthesized protein in an open conformation. Functions as a peptidyl-prolyl cis-trans isomerase. The protein is Trigger factor of Erwinia tasmaniensis (strain DSM 17950 / CFBP 7177 / CIP 109463 / NCPPB 4357 / Et1/99).